The following is a 626-amino-acid chain: DNA primase (626 aa).

A CHC2-type zinc finger spans residues 39-63 (CPFHGEKTPSFSVSPEKQIFHCFGC). Positions 264–346 (EEITLMEGFM…DVFVLQLPAG (83 aa)) constitute a Toprim domain. Mg(2+) contacts are provided by glutamate 270, aspartate 314, and aspartate 316.

This sequence belongs to the DnaG primase family. In terms of assembly, monomer. Interacts with DnaB. It depends on Zn(2+) as a cofactor. The cofactor is Mg(2+).

The enzyme catalyses ssDNA + n NTP = ssDNA/pppN(pN)n-1 hybrid + (n-1) diphosphate.. RNA polymerase that catalyzes the synthesis of short RNA molecules used as primers for DNA polymerase during DNA replication. The protein is DNA primase of Listeria innocua serovar 6a (strain ATCC BAA-680 / CLIP 11262).